Reading from the N-terminus, the 216-residue chain is Histidine biosynthesis bifunctional protein HisIE (216 aa).

Residues 1–127 (MSFIDSLSPQ…GKIVAPPGDT (127 aa)) are phosphoribosyl-AMP cyclohydrolase. The interval 128–216 (LSQVFQVICD…VYRKLQERRR (89 aa)) is phosphoribosyl-ATP pyrophosphohydrolase.

It in the N-terminal section; belongs to the PRA-CH family. The protein in the C-terminal section; belongs to the PRA-PH family.

The protein localises to the cytoplasm. The catalysed reaction is 1-(5-phospho-beta-D-ribosyl)-ATP + H2O = 1-(5-phospho-beta-D-ribosyl)-5'-AMP + diphosphate + H(+). The enzyme catalyses 1-(5-phospho-beta-D-ribosyl)-5'-AMP + H2O = 1-(5-phospho-beta-D-ribosyl)-5-[(5-phospho-beta-D-ribosylamino)methylideneamino]imidazole-4-carboxamide. It participates in amino-acid biosynthesis; L-histidine biosynthesis; L-histidine from 5-phospho-alpha-D-ribose 1-diphosphate: step 2/9. Its pathway is amino-acid biosynthesis; L-histidine biosynthesis; L-histidine from 5-phospho-alpha-D-ribose 1-diphosphate: step 3/9. This chain is Histidine biosynthesis bifunctional protein HisIE (hisI), found in Nostoc sp. (strain PCC 7120 / SAG 25.82 / UTEX 2576).